We begin with the raw amino-acid sequence, 433 residues long: Divergent protein kinase domain 2B (433 aa).

A signal peptide spans 1–29 (MEPRLGPKAAALHLGWPFLLLWVSGLSYS). A glycan (N-linked (GlcNAc...) asparagine) is linked at asparagine 100.

Belongs to the DIPK family.

Its subcellular location is the secreted. The sequence is that of Divergent protein kinase domain 2B (DIPK2B) from Bos taurus (Bovine).